A 98-amino-acid polypeptide reads, in one-letter code: Aspartyl/glutamyl-tRNA(Asn/Gln) amidotransferase subunit C (98 aa).

It belongs to the GatC family. Heterotrimer of A, B and C subunits.

It carries out the reaction L-glutamyl-tRNA(Gln) + L-glutamine + ATP + H2O = L-glutaminyl-tRNA(Gln) + L-glutamate + ADP + phosphate + H(+). The catalysed reaction is L-aspartyl-tRNA(Asn) + L-glutamine + ATP + H2O = L-asparaginyl-tRNA(Asn) + L-glutamate + ADP + phosphate + 2 H(+). In terms of biological role, allows the formation of correctly charged Asn-tRNA(Asn) or Gln-tRNA(Gln) through the transamidation of misacylated Asp-tRNA(Asn) or Glu-tRNA(Gln) in organisms which lack either or both of asparaginyl-tRNA or glutaminyl-tRNA synthetases. The reaction takes place in the presence of glutamine and ATP through an activated phospho-Asp-tRNA(Asn) or phospho-Glu-tRNA(Gln). The polypeptide is Aspartyl/glutamyl-tRNA(Asn/Gln) amidotransferase subunit C (Arthrobacter sp. (strain FB24)).